The following is a 198-amino-acid chain: Recombination protein RecR (198 aa).

The C4-type zinc-finger motif lies at 58 to 73 (CSVCGNFTDKDPCAIC). A Toprim domain is found at 81 to 175 (SIICVIEQPK…KVTRIAHGVP (95 aa)).

The protein belongs to the RecR family.

May play a role in DNA repair. It seems to be involved in an RecBC-independent recombinational process of DNA repair. It may act with RecF and RecO. The polypeptide is Recombination protein RecR (Clostridium botulinum (strain ATCC 19397 / Type A)).